A 263-amino-acid polypeptide reads, in one-letter code: Protein STK_14130 (263 aa).

It belongs to the CinA family.

This Sulfurisphaera tokodaii (strain DSM 16993 / JCM 10545 / NBRC 100140 / 7) (Sulfolobus tokodaii) protein is Protein STK_14130.